The following is a 105-amino-acid chain: Large ribosomal subunit protein uL24 (105 aa).

It belongs to the universal ribosomal protein uL24 family. In terms of assembly, part of the 50S ribosomal subunit.

Its function is as follows. One of two assembly initiator proteins, it binds directly to the 5'-end of the 23S rRNA, where it nucleates assembly of the 50S subunit. One of the proteins that surrounds the polypeptide exit tunnel on the outside of the subunit. The protein is Large ribosomal subunit protein uL24 of Rhizorhabdus wittichii (strain DSM 6014 / CCUG 31198 / JCM 15750 / NBRC 105917 / EY 4224 / RW1) (Sphingomonas wittichii).